The chain runs to 888 residues: Bifunctional uridylyltransferase/uridylyl-removing enzyme (888 aa).

The uridylyltransferase stretch occupies residues 1–348; sequence MATTTDKQVS…YHFAEDKIEP (348 aa). Positions 349-709 are uridylyl-removing; it reads INPRFRIINN…LQPTTSRGAT (361 aa). The region spanning 468-590 is the HD domain; it reads VDEHTILVIR…VGTQQRLDYL (123 aa). ACT domains follow at residues 710–787 and 817–888; these read ELII…DDTM and ELSI…NIEQ.

The protein belongs to the GlnD family. Mg(2+) is required as a cofactor.

It catalyses the reaction [protein-PII]-L-tyrosine + UTP = [protein-PII]-uridylyl-L-tyrosine + diphosphate. It carries out the reaction [protein-PII]-uridylyl-L-tyrosine + H2O = [protein-PII]-L-tyrosine + UMP + H(+). Uridylyltransferase (UTase) activity is inhibited by glutamine, while glutamine activates uridylyl-removing (UR) activity. In terms of biological role, modifies, by uridylylation and deuridylylation, the PII regulatory proteins (GlnB and homologs), in response to the nitrogen status of the cell that GlnD senses through the glutamine level. Under low glutamine levels, catalyzes the conversion of the PII proteins and UTP to PII-UMP and PPi, while under higher glutamine levels, GlnD hydrolyzes PII-UMP to PII and UMP (deuridylylation). Thus, controls uridylylation state and activity of the PII proteins, and plays an important role in the regulation of nitrogen assimilation and metabolism. The polypeptide is Bifunctional uridylyltransferase/uridylyl-removing enzyme (Hydrogenovibrio crunogenus (strain DSM 25203 / XCL-2) (Thiomicrospira crunogena)).